The sequence spans 456 residues: MSGFDRRSFLKASMVTAAATALAACASSERATGTTPKAAGKSVMGLVVPKMDEVRVGLIGVGERGIGFVHHFSRIEGARITAICDTDTLVLARAEKAINEYGRDKPAYFSKGDHAYRDLLNRDDVDIVVIATPWAWHHPMAKEAMLAGKHAFVEVPMAGTIEELWDLVDTAELTQRNCMMMENVCYGRDELMVLNMVRQGLFGELLHGEAAYIHELRWQMKEIDRKTGSWRTAYHAKYNGNLYPTHGLGPVAQYMNINRGDRLDYLTSVSSPSLGRAAYAKREFPADHQRNQLKYIGGDMNTSLIKTVKGRSIMVQHDTTTPRPYSRHNLIQGTNGVFGGFPNRIALENGGSGSYHEWDENMDSWYAKYDHPLWTRMGKEAEENGGHGGMDFLMCWRMIYCLRNGEALDQDVYDGAAWSAVFPLSVASVGDRGNSKDFPDFTRGVWQTAKPLGIVG.

The tat-type signal signal peptide spans 1-33; sequence MSGFDRRSFLKASMVTAAATALAACASSERATG. NAD(+) contacts are provided by residues 63 to 64, Asp-85, 134 to 137, 154 to 155, and Asn-183; these read ER, WAWH, and EV. Substrate contacts are provided by residues Tyr-212, Arg-231, 243 to 246, and Tyr-325; that span reads YPTH. Tyr-243 contributes to the NAD(+) binding site.

Belongs to the Gfo/Idh/MocA family. Glycosyl hydrolase 109 subfamily. It depends on NAD(+) as a cofactor. Predicted to be exported by the Tat system. The position of the signal peptide cleavage has not been experimentally proven.

In terms of biological role, glycosidase. The sequence is that of Glycosyl hydrolase family 109 protein 2 from Shewanella sp. (strain MR-4).